The following is a 133-amino-acid chain: Holo-[acyl-carrier-protein] synthase (133 aa).

The Mg(2+) site is built by Asp-8 and Glu-58.

The protein belongs to the P-Pant transferase superfamily. AcpS family. Requires Mg(2+) as cofactor.

The protein localises to the cytoplasm. It carries out the reaction apo-[ACP] + CoA = holo-[ACP] + adenosine 3',5'-bisphosphate + H(+). In terms of biological role, transfers the 4'-phosphopantetheine moiety from coenzyme A to a Ser of acyl-carrier-protein. The sequence is that of Holo-[acyl-carrier-protein] synthase from Sphingopyxis alaskensis (strain DSM 13593 / LMG 18877 / RB2256) (Sphingomonas alaskensis).